A 167-amino-acid polypeptide reads, in one-letter code: Small ribosomal subunit protein uS5 (167 aa).

Residues 12–75 form the S5 DRBM domain; sequence LQEKLVQVNR…EAARRNMIQV (64 aa).

It belongs to the universal ribosomal protein uS5 family. Part of the 30S ribosomal subunit. Contacts proteins S4 and S8.

Its function is as follows. With S4 and S12 plays an important role in translational accuracy. Located at the back of the 30S subunit body where it stabilizes the conformation of the head with respect to the body. This chain is Small ribosomal subunit protein uS5, found in Alcanivorax borkumensis (strain ATCC 700651 / DSM 11573 / NCIMB 13689 / SK2).